Here is a 227-residue protein sequence, read N- to C-terminus: Adapter protein MecA 1 (227 aa).

This sequence belongs to the MecA family. As to quaternary structure, homodimer.

Functionally, enables the recognition and targeting of unfolded and aggregated proteins to the ClpC protease or to other proteins involved in proteolysis. Acts negatively in the development of competence by binding ComK and recruiting it to the ClpCP protease. When overexpressed, inhibits sporulation. Also involved in Spx degradation by ClpC. This Bacillus cereus (strain ATCC 14579 / DSM 31 / CCUG 7414 / JCM 2152 / NBRC 15305 / NCIMB 9373 / NCTC 2599 / NRRL B-3711) protein is Adapter protein MecA 1 (mecA1).